The chain runs to 873 residues: Serine/threonine-protein phosphatase 4 regulatory subunit 4 (873 aa).

HEAT repeat units follow at residues 213-251, 252-290, and 392-427; these read ILPLVKSLCQDVEYEVRSCMCRQLENIAQGIGTELTKSV, VLPELIELSRDEGSSVRLAAFETLVNLLDIFDTDDRSQT, and NFHMELYSTFFCLCHDPEVPVRYTIAICFYEVSKLL. A coiled-coil region spans residues 686-720; that stretch reads QKKFYEKDLLDQEKEREELLLLEMEQLEKEKQQND. The segment covering 713–737 has biased composition (basic and acidic residues); it reads EKEKQQNDGRPMSDKMFEKKRRDTK. The segment at 713 to 766 is disordered; sequence EKEKQQNDGRPMSDKMFEKKRRDTKTPTQSLPKNIPISVPGPSSVTPSTSKEIK. Residues 747–762 show a composition bias toward low complexity; sequence IPISVPGPSSVTPSTS. Position 775 is a phosphoserine (serine 775). Threonine 797 carries the phosphothreonine modification. Residues 822–858 are compositionally biased toward polar residues; sequence TRNASSVPSSFSPNTPLPSTSRGTGNSVDPKSSGSKD. The segment at 822-873 is disordered; the sequence is TRNASSVPSSFSPNTPLPSTSRGTGNSVDPKSSGSKDTQPRKATLKSRKSNP. Over residues 864 to 873 the composition is skewed to basic residues; sequence ATLKSRKSNP.

As to quaternary structure, serine/threonine-protein phosphatase 4 (PP4) occurs in different assemblies of the catalytic and one or more regulatory subunits. Component of the PP4 complex PPP4C-PPP4R4.

It is found in the cytoplasm. In terms of biological role, putative regulatory subunit of serine/threonine-protein phosphatase 4. In Homo sapiens (Human), this protein is Serine/threonine-protein phosphatase 4 regulatory subunit 4 (PPP4R4).